The sequence spans 395 residues: Acetate kinase (395 aa).

N8 serves as a coordination point for Mg(2+). K15 is a binding site for ATP. R90 is a binding site for substrate. D147 functions as the Proton donor/acceptor in the catalytic mechanism. ATP-binding positions include 207 to 211, 284 to 286, and 330 to 334; these read HLGNG, DMR, and GIGEN. A Mg(2+)-binding site is contributed by E383.

It belongs to the acetokinase family. In terms of assembly, homodimer. Mg(2+) serves as cofactor. Requires Mn(2+) as cofactor.

Its subcellular location is the cytoplasm. It catalyses the reaction acetate + ATP = acetyl phosphate + ADP. Its pathway is metabolic intermediate biosynthesis; acetyl-CoA biosynthesis; acetyl-CoA from acetate: step 1/2. Functionally, catalyzes the formation of acetyl phosphate from acetate and ATP. Can also catalyze the reverse reaction. This Enterococcus faecalis (strain ATCC 700802 / V583) protein is Acetate kinase.